A 428-amino-acid chain; its full sequence is Ribulose bisphosphate carboxylase (428 aa).

Catalysis depends on K151, which acts as the Proton acceptor. K153 contacts substrate. Residues K177, D179, and E180 each coordinate Mg(2+). K177 is subject to N6-carboxylysine. The active-site Proton acceptor is the H270. Substrate contacts are provided by residues R271, H303, 354–356 (SGG), and 376–379 (QFGG).

Belongs to the RuBisCO large chain family. Type III subfamily. As to quaternary structure, homodimer or homodecamer. In contrast to form I RuBisCO, the form III RuBisCO is composed solely of large subunits. Mg(2+) serves as cofactor.

The catalysed reaction is 2 (2R)-3-phosphoglycerate + 2 H(+) = D-ribulose 1,5-bisphosphate + CO2 + H2O. It carries out the reaction D-ribulose 1,5-bisphosphate + O2 = 2-phosphoglycolate + (2R)-3-phosphoglycerate + 2 H(+). Its function is as follows. Catalyzes the addition of molecular CO(2) and H(2)O to ribulose 1,5-bisphosphate (RuBP), generating two molecules of 3-phosphoglycerate (3-PGA). Functions in an archaeal AMP degradation pathway, together with AMP phosphorylase and R15P isomerase. The polypeptide is Ribulose bisphosphate carboxylase (Methanosarcina mazei (strain ATCC BAA-159 / DSM 3647 / Goe1 / Go1 / JCM 11833 / OCM 88) (Methanosarcina frisia)).